The primary structure comprises 329 residues: Beta-tectorin (329 aa).

Positions 1–17 are cleaved as a signal peptide; that stretch reads MVTKAFVLLAIFAEASA. The ZP domain maps to 19–283; the sequence is SCAPNKADVI…LSCPVTCDKR (265 aa). Asn-80, Asn-104, Asn-116, and Asn-145 each carry an N-linked (GlcNAc...) asparagine glycan. An intrachain disulfide couples Cys-204 to Cys-264. A lipid anchor (GPI-anchor amidated glycine) is attached at Gly-305. A propeptide spans 306–329 (removed in mature form); it reads FSSLYSFSDVLHHLIMMLGICAVL.

May form homomeric filament after self-association or heteromeric filament after association with alpha-tectorin. Interacts with CEACAM16. Post-translationally, the presence of a hydrophobic C-terminus preceded by a potential cleavage site strongly suggests that tectorins are synthesized as glycosylphosphatidylinositol-linked, membrane-bound precursors. Tectorins are targeted to the apical surface of the inner ear epithelia by the lipid and proteolytically released into the extracellular compartment.

Its subcellular location is the cell membrane. The protein localises to the secreted. The protein resides in the extracellular space. It localises to the extracellular matrix. In terms of biological role, one of the major non-collagenous components of the tectorial membrane. The tectorial membrane is an extracellular matrix of the inner ear that covers the neuroepithelium of the cochlea and contacts the stereocilia bundles of specialized sensory hair cells. Sound induces movement of these hair cells relative to the tectorial membrane, deflects the stereocilia and leads to fluctuations in hair-cell membrane potential, transducing sound into electrical signals. The protein is Beta-tectorin (TECTB) of Homo sapiens (Human).